The following is a 569-amino-acid chain: Urease subunit beta (569 aa).

The Urease domain maps to 131–569 (GGIDTHIHFI…LSLAQLYNLF (439 aa)). 3 residues coordinate Ni(2+): His136, His138, and Lys219. N6-carboxylysine is present on Lys219. His221 provides a ligand contact to substrate. Ni(2+) contacts are provided by His248 and His274. His322 functions as the Proton donor in the catalytic mechanism. Residue Asp362 participates in Ni(2+) binding.

It belongs to the metallo-dependent hydrolases superfamily. Urease alpha subunit family. In terms of assembly, heterohexamer of 3 UreA (alpha) and 3 UreB (beta) subunits. The cofactor is Ni cation. Post-translationally, carboxylation allows a single lysine to coordinate two nickel ions.

The protein resides in the cytoplasm. It catalyses the reaction urea + 2 H2O + H(+) = hydrogencarbonate + 2 NH4(+). It participates in nitrogen metabolism; urea degradation; CO(2) and NH(3) from urea (urease route): step 1/1. The protein is Urease subunit beta of Helicobacter felis (strain ATCC 49179 / CCUG 28539 / NCTC 12436 / CS1).